Reading from the N-terminus, the 428-residue chain is Citrate synthase (428 aa).

Catalysis depends on residues histidine 265, histidine 306, and aspartate 363.

The protein belongs to the citrate synthase family. Homohexamer.

It carries out the reaction oxaloacetate + acetyl-CoA + H2O = citrate + CoA + H(+). Its pathway is carbohydrate metabolism; tricarboxylic acid cycle; isocitrate from oxaloacetate: step 1/2. Allosterically inhibited by NADH. This Pseudomonas aeruginosa (strain ATCC 15692 / DSM 22644 / CIP 104116 / JCM 14847 / LMG 12228 / 1C / PRS 101 / PAO1) protein is Citrate synthase (gltA).